A 211-amino-acid polypeptide reads, in one-letter code: Uracil phosphoribosyltransferase (211 aa).

5-phospho-alpha-D-ribose 1-diphosphate contacts are provided by residues Arg-78, Arg-103, and 130–138; that span reads DPMLATGSS. Uracil is bound by residues Ile-193 and 198–200; that span reads GDA. Position 199 (Asp-199) interacts with 5-phospho-alpha-D-ribose 1-diphosphate.

This sequence belongs to the UPRTase family. Mg(2+) is required as a cofactor.

The enzyme catalyses UMP + diphosphate = 5-phospho-alpha-D-ribose 1-diphosphate + uracil. It functions in the pathway pyrimidine metabolism; UMP biosynthesis via salvage pathway; UMP from uracil: step 1/1. With respect to regulation, allosterically activated by GTP. Functionally, catalyzes the conversion of uracil and 5-phospho-alpha-D-ribose 1-diphosphate (PRPP) to UMP and diphosphate. In Acinetobacter baylyi (strain ATCC 33305 / BD413 / ADP1), this protein is Uracil phosphoribosyltransferase.